The following is a 101-amino-acid chain: Large ribosomal subunit protein uL23 (101 aa).

It belongs to the universal ribosomal protein uL23 family. Part of the 50S ribosomal subunit. Contacts protein L29, and trigger factor when it is bound to the ribosome.

Functionally, one of the early assembly proteins it binds 23S rRNA. One of the proteins that surrounds the polypeptide exit tunnel on the outside of the ribosome. Forms the main docking site for trigger factor binding to the ribosome. In Histophilus somni (strain 129Pt) (Haemophilus somnus), this protein is Large ribosomal subunit protein uL23.